The sequence spans 426 residues: Glutamate-1-semialdehyde 2,1-aminomutase (426 aa).

At Lys265 the chain carries N6-(pyridoxal phosphate)lysine.

This sequence belongs to the class-III pyridoxal-phosphate-dependent aminotransferase family. HemL subfamily. In terms of assembly, homodimer. It depends on pyridoxal 5'-phosphate as a cofactor.

The protein localises to the cytoplasm. The catalysed reaction is (S)-4-amino-5-oxopentanoate = 5-aminolevulinate. It functions in the pathway porphyrin-containing compound metabolism; protoporphyrin-IX biosynthesis; 5-aminolevulinate from L-glutamyl-tRNA(Glu): step 2/2. The chain is Glutamate-1-semialdehyde 2,1-aminomutase from Salmonella typhi.